Here is a 174-residue protein sequence, read N- to C-terminus: Inactive signal peptidase IA (174 aa).

Topologically, residues Met-1–Tyr-7 are cytoplasmic. The chain crosses the membrane as a helical span at residues Leu-8–Gly-28. Topologically, residues His-29–Ser-174 are extracellular.

This sequence belongs to the peptidase S26 family.

The protein localises to the cell membrane. Catalytically inactive. This chain is Inactive signal peptidase IA (spsA), found in Staphylococcus aureus (strain COL).